A 439-amino-acid chain; its full sequence is O-methyltransferase aurJ (439 aa).

Aspartate 283 is an S-adenosyl-L-methionine binding site. Histidine 338 (proton acceptor) is an active-site residue.

The protein belongs to the class I-like SAM-binding methyltransferase superfamily. Cation-independent O-methyltransferase family. COMT subfamily.

The enzyme catalyses norrubrofusarin + S-adenosyl-L-methionine = rubrofusarin + S-adenosyl-L-homocysteine + H(+). Its pathway is pigment biosynthesis. O-methyltransferase; part of the gene cluster that mediates the biosynthesis of aurofusarin, a red mycelium pigment which is acting as a mycotoxin. The first step is performed by the polyketide synthase which condenses one acetyl-CoA and 6 malonyl-CoA units to form the first intermediate, the cyclic heptaketide and yellow pigment YWA1. The C2 hydroxyl group in the pyrone ring of YWA1 is probably formed during ring closure by an aldol-type cyclization reaction. The dehydratase aurZ then acts as the first tailoring enzyme in the aurofusarin biosynthetic pathway by converting YWA1 to nor-rubrofusarin. Nor-rubrofusarin is then methylated to rubrofusarin by the O-methyltransferase aurJ. Rubrofusarin is then transported across the plasma membrane by the rubrofusarin-specific pump aurT for further enzymatic processing by the extracellular complex composed of GIP1, aurF, aurO and aurS to yield aurofusarin. The polypeptide is O-methyltransferase aurJ (Gibberella zeae (strain ATCC MYA-4620 / CBS 123657 / FGSC 9075 / NRRL 31084 / PH-1) (Wheat head blight fungus)).